The following is a 120-amino-acid chain: Large ribosomal subunit protein uL14 (120 aa).

It belongs to the universal ribosomal protein uL14 family. As to quaternary structure, part of the 50S ribosomal subunit. Forms a cluster with proteins L3 and L19. In the 70S ribosome, L14 and L19 interact and together make contacts with the 16S rRNA in bridges B5 and B8.

Binds to 23S rRNA. Forms part of two intersubunit bridges in the 70S ribosome. This is Large ribosomal subunit protein uL14 from Karelsulcia muelleri (strain GWSS) (Sulcia muelleri).